Consider the following 333-residue polypeptide: Fructose-1,6-bisphosphatase class 1 (333 aa).

The Mg(2+) site is built by Glu90, Asp112, Leu114, and Asp115. Residues Asp115–Ser118, Asn207, and Lys273 each bind substrate. Glu279 is a binding site for Mg(2+).

Belongs to the FBPase class 1 family. Homotetramer. Mg(2+) serves as cofactor.

The protein localises to the cytoplasm. It catalyses the reaction beta-D-fructose 1,6-bisphosphate + H2O = beta-D-fructose 6-phosphate + phosphate. Its pathway is carbohydrate biosynthesis; gluconeogenesis. The protein is Fructose-1,6-bisphosphatase class 1 of Aromatoleum aromaticum (strain DSM 19018 / LMG 30748 / EbN1) (Azoarcus sp. (strain EbN1)).